The chain runs to 369 residues: 3-isopropylmalate dehydrogenase (369 aa).

Residue 77 to 90 (GPKWDDLPFDKKPE) participates in NAD(+) binding. Substrate contacts are provided by Arg-97, Arg-107, Arg-135, and Asp-226. Mg(2+)-binding residues include Asp-226, Asp-250, and Asp-254. 289-301 (GSAPDIAGKDMAN) is a binding site for NAD(+).

The protein belongs to the isocitrate and isopropylmalate dehydrogenases family. LeuB type 1 subfamily. As to quaternary structure, homodimer. The cofactor is Mg(2+). Mn(2+) serves as cofactor.

Its subcellular location is the cytoplasm. It carries out the reaction (2R,3S)-3-isopropylmalate + NAD(+) = 4-methyl-2-oxopentanoate + CO2 + NADH. Its pathway is amino-acid biosynthesis; L-leucine biosynthesis; L-leucine from 3-methyl-2-oxobutanoate: step 3/4. Its function is as follows. Catalyzes the oxidation of 3-carboxy-2-hydroxy-4-methylpentanoate (3-isopropylmalate) to 3-carboxy-4-methyl-2-oxopentanoate. The product decarboxylates to 4-methyl-2 oxopentanoate. This chain is 3-isopropylmalate dehydrogenase, found in Paramagnetospirillum magneticum (strain ATCC 700264 / AMB-1) (Magnetospirillum magneticum).